We begin with the raw amino-acid sequence, 200 residues long: 5'(3')-deoxyribonucleotidase, cytosolic type (200 aa).

Aspartate 12 functions as the Nucleophile in the catalytic mechanism. Residues aspartate 12 and aspartate 14 each coordinate Mg(2+). The active-site Proton donor is the aspartate 14. The substrate site is built by phenylalanine 20, phenylalanine 46, tyrosine 67, and threonine 101. Threonine 102 is subject to Phosphothreonine. Lysine 136 lines the substrate pocket. Aspartate 147 contributes to the Mg(2+) binding site. Serine 184 carries the post-translational modification Phosphoserine.

Belongs to the 5'(3')-deoxyribonucleotidase family. As to quaternary structure, homodimer. Mg(2+) serves as cofactor.

The protein resides in the cytoplasm. Its function is as follows. Dephosphorylates the 5' and 2'(3')-phosphates of deoxyribonucleotides, with a preference for dUMP and dTMP, intermediate activity towards dGMP, and low activity towards dCMP and dAMP. This Mus musculus (Mouse) protein is 5'(3')-deoxyribonucleotidase, cytosolic type (Nt5c).